The primary structure comprises 688 residues: MARTVDLINFRNFGIMAHIDAGKTTTSERILFHSGRIHKIGETHDGESVMDWMEQEKERGITITSAATSVSWKNCSLNLIDTPGHVDFTVEVERSLRVLDGAIAVLDAQMGVEPQTETVWRQASRYEVPRIIFVNKMDKTGANFERSVQSIQQRLGVKAVPIQLPIGAENDFNGIIDLIEEKVYFFDGGKEEKAEEKPIPDQFKDQVKQMRAHLVEEVANFDDQLMADYLEGKEISIADIKRCIRKGVIGCQFFPVLCGSAFKNKGIKLLLDAVVDFLPSPVDVPQAKAYGEDGNEVLISASDDAPFVGLAFKVATDPFVGRLTFVRVYSGVLKSGSYVKNVRKNKKERVSRLVKMHAQNRNEIEEIRAGDICAIIGLKDTTTGETLVDDKIDVQLEAMQFAQPVISLAVEPKTKADQEKMSIALSKLAEEDPTFKTFTDPETGQTIIAGMGELHLDILVDRMRREFKVEVNVGAPQVSFRETFNKESEVEGKYIKQSGGRGQYGHVKIRFEPNKDKGFEFVDKIVGGRIPREYIKPVQAGLENAMASGPLAGYPMIDIKATLFDGSFHEVDSSEMAFKIAASLALKEAGKVCSPVLLEPIMAIEVTVPEQYFGDTMGDISSRRGLIEGTEQRDNVQVIKAKVPLKEMFGYATDLRSFSQGRGNYVMQFSHYAETPKSVVNEIIATKK.

A tr-type G domain is found at 8–282; that stretch reads INFRNFGIMA…AVVDFLPSPV (275 aa). GTP-binding positions include 17-24, 81-85, and 135-138; these read AHIDAGKT, DTPGH, and NKMD.

It belongs to the TRAFAC class translation factor GTPase superfamily. Classic translation factor GTPase family. EF-G/EF-2 subfamily.

Its subcellular location is the cytoplasm. Its function is as follows. Catalyzes the GTP-dependent ribosomal translocation step during translation elongation. During this step, the ribosome changes from the pre-translocational (PRE) to the post-translocational (POST) state as the newly formed A-site-bound peptidyl-tRNA and P-site-bound deacylated tRNA move to the P and E sites, respectively. Catalyzes the coordinated movement of the two tRNA molecules, the mRNA and conformational changes in the ribosome. In Mycoplasma pneumoniae (strain ATCC 29342 / M129 / Subtype 1) (Mycoplasmoides pneumoniae), this protein is Elongation factor G (fusA).